Here is a 162-residue protein sequence, read N- to C-terminus: 2-C-methyl-D-erythritol 2,4-cyclodiphosphate synthase (162 aa).

D12 and H14 together coordinate a divalent metal cation. 4-CDP-2-C-methyl-D-erythritol 2-phosphate-binding positions include 12–14 and 38–39; these read DVH and HS. Residue H46 participates in a divalent metal cation binding. Residues 60 to 62, 65 to 69, and R146 contribute to the 4-CDP-2-C-methyl-D-erythritol 2-phosphate site; these read DIG and FPDTD.

Belongs to the IspF family. In terms of assembly, homotrimer. Requires a divalent metal cation as cofactor.

It carries out the reaction 4-CDP-2-C-methyl-D-erythritol 2-phosphate = 2-C-methyl-D-erythritol 2,4-cyclic diphosphate + CMP. It participates in isoprenoid biosynthesis; isopentenyl diphosphate biosynthesis via DXP pathway; isopentenyl diphosphate from 1-deoxy-D-xylulose 5-phosphate: step 4/6. Functionally, involved in the biosynthesis of isopentenyl diphosphate (IPP) and dimethylallyl diphosphate (DMAPP), two major building blocks of isoprenoid compounds. Catalyzes the conversion of 4-diphosphocytidyl-2-C-methyl-D-erythritol 2-phosphate (CDP-ME2P) to 2-C-methyl-D-erythritol 2,4-cyclodiphosphate (ME-CPP) with a corresponding release of cytidine 5-monophosphate (CMP). This is 2-C-methyl-D-erythritol 2,4-cyclodiphosphate synthase from Bordetella bronchiseptica (strain ATCC BAA-588 / NCTC 13252 / RB50) (Alcaligenes bronchisepticus).